Consider the following 293-residue polypeptide: uncharacterized protein (293 aa).

The HTH lysR-type domain occupies 1-58 (MELKQLITFITAAEHVNFTLTAKMLNYAQSSVTSQIKSLEEEIGTPLFERLGKRLILT). Positions 18-37 (FTLTAKMLNYAQSSVTSQIK) form a DNA-binding region, H-T-H motif.

Belongs to the LysR transcriptional regulatory family.

Its subcellular location is the cytoplasm. This is an uncharacterized protein from Bacillus subtilis (strain 168).